A 163-amino-acid chain; its full sequence is Putative 4-hydroxy-4-methyl-2-oxoglutarate aldolase (163 aa).

Residues 76–79 (GDML) and R98 each bind substrate. D99 contacts a divalent metal cation.

This sequence belongs to the class II aldolase/RraA-like family. Homotrimer. A divalent metal cation serves as cofactor.

It carries out the reaction 4-hydroxy-4-methyl-2-oxoglutarate = 2 pyruvate. It catalyses the reaction oxaloacetate + H(+) = pyruvate + CO2. Its function is as follows. Catalyzes the aldol cleavage of 4-hydroxy-4-methyl-2-oxoglutarate (HMG) into 2 molecules of pyruvate. Also contains a secondary oxaloacetate (OAA) decarboxylase activity due to the common pyruvate enolate transition state formed following C-C bond cleavage in the retro-aldol and decarboxylation reactions. The polypeptide is Putative 4-hydroxy-4-methyl-2-oxoglutarate aldolase (Pseudomonas putida (strain GB-1)).